Reading from the N-terminus, the 235-residue chain is Glutathione S-transferase L3 (235 aa).

The GST N-terminal domain occupies 27–108 (GTTRLYTSYV…YLDNTFEGPS (82 aa)). Residues 37–38 (CP), 65–66 (NR), 79–80 (KV), and 92–93 (ES) each bind glutathione. Residues 86–230 (NGKIIGESLD…MDPKEIVEVF (145 aa)) enclose the GST C-terminal domain.

It belongs to the GST superfamily. Lambda family.

The protein resides in the cytoplasm. It localises to the cytosol. The catalysed reaction is RX + glutathione = an S-substituted glutathione + a halide anion + H(+). Catalyzes the glutathione-dependent reduction of S-glutathionylquercetin to quercetin. In Arabidopsis thaliana (Mouse-ear cress), this protein is Glutathione S-transferase L3 (GSTL3).